Reading from the N-terminus, the 503-residue chain is ATP synthase subunit alpha (503 aa).

171 to 178 (DRQTGKTA) is a binding site for ATP.

Belongs to the ATPase alpha/beta chains family. In terms of assembly, F-type ATPases have 2 components, CF(1) - the catalytic core - and CF(0) - the membrane proton channel. CF(1) has five subunits: alpha(3), beta(3), gamma(1), delta(1), epsilon(1). CF(0) has four main subunits: a(1), b(1), b'(1) and c(9-12).

The protein resides in the cellular thylakoid membrane. It catalyses the reaction ATP + H2O + 4 H(+)(in) = ADP + phosphate + 5 H(+)(out). Functionally, produces ATP from ADP in the presence of a proton gradient across the membrane. The alpha chain is a regulatory subunit. This chain is ATP synthase subunit alpha, found in Synechococcus sp. (strain PCC 6716).